A 158-amino-acid chain; its full sequence is Transcription elongation factor GreA (158 aa).

It belongs to the GreA/GreB family.

Necessary for efficient RNA polymerase transcription elongation past template-encoded arresting sites. The arresting sites in DNA have the property of trapping a certain fraction of elongating RNA polymerases that pass through, resulting in locked ternary complexes. Cleavage of the nascent transcript by cleavage factors such as GreA or GreB allows the resumption of elongation from the new 3'terminus. GreA releases sequences of 2 to 3 nucleotides. This Rhizobium johnstonii (strain DSM 114642 / LMG 32736 / 3841) (Rhizobium leguminosarum bv. viciae) protein is Transcription elongation factor GreA.